The chain runs to 117 residues: Immunoglobulin heavy variable 4-4 (117 aa).

A signal peptide spans 1–19; that stretch reads MKHLWFFLLLVAAPRWVLS. The tract at residues 20–44 is framework-1; that stretch reads QVQLQESGPGLVKPSGTLSLTCAVS. Positions 20-117 constitute an Ig-like domain; that stretch reads QVQLQESGPG…ADTAVYYCAR (98 aa). Residues C41 and C115 are joined by a disulfide bond. A complementarity-determining-1 region spans residues 45–53; sequence GGSISSSNW. The framework-2 stretch occupies residues 54–70; it reads WSWVRQPPGKGLEWIGE. Residues 71–77 form a complementarity-determining-2 region; the sequence is IYHSGST. The segment at 78–115 is framework-3; sequence NYNPSLKSRVTISVDKSKNQFSLKLSSVTAADTAVYYC. The tract at residues 116 to 117 is complementarity-determining-3; sequence AR.

As to quaternary structure, immunoglobulins are composed of two identical heavy chains and two identical light chains; disulfide-linked.

It localises to the secreted. The protein resides in the cell membrane. Functionally, v region of the variable domain of immunoglobulin heavy chains that participates in the antigen recognition. Immunoglobulins, also known as antibodies, are membrane-bound or secreted glycoproteins produced by B lymphocytes. In the recognition phase of humoral immunity, the membrane-bound immunoglobulins serve as receptors which, upon binding of a specific antigen, trigger the clonal expansion and differentiation of B lymphocytes into immunoglobulins-secreting plasma cells. Secreted immunoglobulins mediate the effector phase of humoral immunity, which results in the elimination of bound antigens. The antigen binding site is formed by the variable domain of one heavy chain, together with that of its associated light chain. Thus, each immunoglobulin has two antigen binding sites with remarkable affinity for a particular antigen. The variable domains are assembled by a process called V-(D)-J rearrangement and can then be subjected to somatic hypermutations which, after exposure to antigen and selection, allow affinity maturation for a particular antigen. This Homo sapiens (Human) protein is Immunoglobulin heavy variable 4-4.